The chain runs to 23 residues: Magainin-BM2 (23 aa).

Expressed by the skin glands.

The protein localises to the secreted. Antimicrobial peptide. The chain is Magainin-BM2 from Xenopus boumbaensis (Mawa clawed frog).